Here is a 275-residue protein sequence, read N- to C-terminus: MTSTSNLIEQVIEAWQNMQAKTPLVQCITNSVAANYTANVLLASGASPAMIDNPYEAESFTKISSALSINLGTPTSEQMQAMQISAKTAQLNNIPWVLDPVGYGPILAWRSQMTDELLQFKPSVIRGNASEISTLAGNQVQSKGVDSTLSSDQAYQQAYALLAHADCIAISGESDYILSNEIDAVIQVNGGSPLQPKITATGCALGALIAAYSAVATPTIAALSAHVHFAIAGKLAANQAQTMGSFSSIFMDYIHMLDDNLIEQYADIKLLNIQA.

Met-50 contacts substrate. ATP is bound by residues Arg-126 and Ser-171. Ala-200 contacts substrate.

Belongs to the Thz kinase family. Mg(2+) is required as a cofactor.

The catalysed reaction is 5-(2-hydroxyethyl)-4-methylthiazole + ATP = 4-methyl-5-(2-phosphooxyethyl)-thiazole + ADP + H(+). The protein operates within cofactor biosynthesis; thiamine diphosphate biosynthesis; 4-methyl-5-(2-phosphoethyl)-thiazole from 5-(2-hydroxyethyl)-4-methylthiazole: step 1/1. In terms of biological role, catalyzes the phosphorylation of the hydroxyl group of 4-methyl-5-beta-hydroxyethylthiazole (THZ). This is Hydroxyethylthiazole kinase from Acinetobacter baumannii (strain ACICU).